The primary structure comprises 462 residues: Receptor like protein 29 (462 aa).

A signal peptide spans 1–26; it reads MTMKRALPSPSSLLFFFLLITPLFLC. The Extracellular segment spans residues 27–441; the sequence is QENRVSASMP…SQASRYYRSC (415 aa). N-linked (GlcNAc...) asparagine glycosylation is present at Asn139. LRR repeat units lie at residues 139 to 164, 165 to 188, 190 to 212, 213 to 236, 238 to 260, 261 to 284, 286 to 308, 309 to 331, 332 to 355, and 357 to 381; these read NSSL…ISSL, KSLQ…IFSL, SLVH…LGNL, NNLV…ISQL, MLQK…VEKL, RSLS…ISNL, SLQY…LGFL, PKLQ…SYTK, LTNL…GFES, and PHVF…SFLR. 3 N-linked (GlcNAc...) asparagine glycosylation sites follow: Asn334, Asn363, and Asn416. A helical membrane pass occupies residues 442 to 462; it reads FFANALFPFALFLGLHQRWVL.

It belongs to the RLP family.

Its subcellular location is the cell membrane. The polypeptide is Receptor like protein 29 (Arabidopsis thaliana (Mouse-ear cress)).